A 764-amino-acid chain; its full sequence is MEAMMNFTSQYTVEEALAIENEFSRLKEKCYLDHAGTTLYADSQIRSVCEGLAQNLYCNPHTSRTTEDLLDQVRYRVLRHFNTRSSEYSLIFTSGTTASLKLLAESFEFAPEGAFVYLKDSHTSVLGMREIVGTERIYPVEREQLLKELDSSERSDNEHSSLIVFPAQCNFNGVKYPLELVRKIQRDGISGYGKERFRVCLDAASFVSTSFLDLSKYQPDFVCLSFYKIFGYPTGLGALLVHHTAADQLRKKYYGGGTVKIAMAGRIFHVKRDPLVERFEDGTLAFTSIIALLQGFETLERLVPSTAGLRTIERISQQTFHIGRYCYNRLKALRHSNENAVVKLYHDTGFEDRGLQGGIVNFNILHEDGTYVGFAEVSYMASLHNILLRTGCFCNPGACQRHLQLSDEDVLKQFDAGHVCGDANDLIDGQPTGSVRVSFGYMTRKEDIDCLLEMIEKCYIRKTIANGFTRTQIVSKYKSHDQPRLKMICLFPIKSCGAFKVTTRWPLSRRGLKHDREFVIVDENGVALTQKKLAEMCLIRPQINVKTNEMTLSHPGMADFVLQLDLLGESQRIKLCQTKVCQDNVQAIDCGDQVAEWISVALQTSGLRLLKQSDEEVRTFQQSKQEIALANQAQFLLINQASVRWLADKVPDWDELHEEPTLESLVDRFRGNLIVETPKSMEECDWKRVTIGYLEFAVDGPCSRCQMICIDQGTGVKATEPLRTIGREFKGKMRFGIYLSHVNPLRDGSEQWLYCNSVVEGLSE.

Position 228 is an N6-(pyridoxal phosphate)lysine (Lys228). Cys394 is an active-site residue. An MOSC domain is found at Leu607 to Leu762.

Belongs to the class-V pyridoxal-phosphate-dependent aminotransferase family. MOCOS subfamily. Pyridoxal 5'-phosphate is required as a cofactor.

It catalyses the reaction Mo-molybdopterin + L-cysteine + AH2 = thio-Mo-molybdopterin + L-alanine + A + H2O. Functionally, sulfurates the molybdenum cofactor. Sulfation of molybdenum is essential for xanthine dehydrogenase (XDH) and aldehyde oxidase (ADO) enzymes in which molybdenum cofactor is liganded by 1 oxygen and 1 sulfur atom in active form. This is Molybdenum cofactor sulfurase 1 from Aedes aegypti (Yellowfever mosquito).